Here is a 448-residue protein sequence, read N- to C-terminus: Probable rhamnogalacturonase E (448 aa).

A signal peptide spans 1-22 (MTWSTSFLVATSLLSIINSVHA). Cys-43 and Cys-69 are disulfide-bonded. N-linked (GlcNAc...) asparagine glycosylation is found at Asn-54, Asn-92, and Asn-131. Asp-221 functions as the Proton donor in the catalytic mechanism. A disulfide bridge connects residues Cys-223 and Cys-240. 2 N-linked (GlcNAc...) asparagine glycosylation sites follow: Asn-256 and Asn-284. Residue His-296 is part of the active site. N-linked (GlcNAc...) asparagine glycans are attached at residues Asn-323 and Asn-328. Disulfide bonds link Cys-346-Cys-352 and Cys-374-Cys-382.

The protein belongs to the glycosyl hydrolase 28 family.

It is found in the secreted. Functionally, pectinolytic enzymes consist of four classes of enzymes: pectine lyase, polygalacturonase, pectin methylesterase and rhamnogalacturonase. Hydrolyzes alpha-D-galacturonopyranosyl-(1,2)-alpha-L-rhamnopyranosyl linkages in the backbone of the hairy regions of pectins. In Aspergillus niger (strain ATCC MYA-4892 / CBS 513.88 / FGSC A1513), this protein is Probable rhamnogalacturonase E (rhgE).